A 578-amino-acid chain; its full sequence is Rhamnogalacturonate lyase (578 aa).

Positions Met-1–Gly-27 are cleaved as a signal peptide.

Belongs to the polysaccharide lyase 4 family.

The protein resides in the secreted. It carries out the reaction Endotype eliminative cleavage of L-alpha-rhamnopyranosyl-(1-&gt;4)-alpha-D-galactopyranosyluronic acid bonds of rhamnogalacturonan I domains in ramified hairy regions of pectin leaving L-rhamnopyranose at the reducing end and 4-deoxy-4,5-unsaturated D-galactopyranosyluronic acid at the non-reducing end.. Degrades the rhamnogalacturonan I (RG-I) backbone of pectin. Is required for the full virulence of E.chrysanthemi strain 3937 as it is involved in rotting of plant tissue. In Dickeya dadantii (strain 3937) (Erwinia chrysanthemi (strain 3937)), this protein is Rhamnogalacturonate lyase (rhiE).